Reading from the N-terminus, the 473-residue chain is Adenosylhomocysteinase (473 aa).

Threonine 64, aspartate 139, and glutamate 199 together coordinate substrate. 200–202 (TTT) provides a ligand contact to NAD(+). The substrate site is built by lysine 229 and aspartate 233. Residues asparagine 234, 263 to 268 (GYGDVG), glutamate 286, asparagine 321, 342 to 344 (IGH), and asparagine 387 each bind NAD(+).

This sequence belongs to the adenosylhomocysteinase family. NAD(+) serves as cofactor.

It is found in the cytoplasm. It catalyses the reaction S-adenosyl-L-homocysteine + H2O = L-homocysteine + adenosine. It participates in amino-acid biosynthesis; L-homocysteine biosynthesis; L-homocysteine from S-adenosyl-L-homocysteine: step 1/1. In terms of biological role, may play a key role in the regulation of the intracellular concentration of adenosylhomocysteine. The sequence is that of Adenosylhomocysteinase from Burkholderia thailandensis (strain ATCC 700388 / DSM 13276 / CCUG 48851 / CIP 106301 / E264).